Consider the following 239-residue polypeptide: 4-hydroxy-tetrahydrodipicolinate reductase (239 aa).

Residues 9–14 (GINGKM), 78–80 (GTT), and 104–107 (APNF) each bind NAD(+). The active-site Proton donor/acceptor is the His-134. His-135 serves as a coordination point for (S)-2,3,4,5-tetrahydrodipicolinate. Catalysis depends on Lys-138, which acts as the Proton donor. 144–145 (GT) provides a ligand contact to (S)-2,3,4,5-tetrahydrodipicolinate.

This sequence belongs to the DapB family.

It localises to the cytoplasm. It carries out the reaction (S)-2,3,4,5-tetrahydrodipicolinate + NAD(+) + H2O = (2S,4S)-4-hydroxy-2,3,4,5-tetrahydrodipicolinate + NADH + H(+). The catalysed reaction is (S)-2,3,4,5-tetrahydrodipicolinate + NADP(+) + H2O = (2S,4S)-4-hydroxy-2,3,4,5-tetrahydrodipicolinate + NADPH + H(+). It functions in the pathway amino-acid biosynthesis; L-lysine biosynthesis via DAP pathway; (S)-tetrahydrodipicolinate from L-aspartate: step 4/4. In terms of biological role, catalyzes the conversion of 4-hydroxy-tetrahydrodipicolinate (HTPA) to tetrahydrodipicolinate. The polypeptide is 4-hydroxy-tetrahydrodipicolinate reductase (Coxiella burnetii (strain Dugway 5J108-111)).